We begin with the raw amino-acid sequence, 178 residues long: Transcription termination/antitermination protein NusG (178 aa).

One can recognise a KOW domain in the interval 126-156 (VGQQVRVNEGPFADFNGVVEEVNYERNKLRV).

It belongs to the NusG family.

Functionally, participates in transcription elongation, termination and antitermination. The sequence is that of Transcription termination/antitermination protein NusG from Neisseria meningitidis serogroup B (strain ATCC BAA-335 / MC58).